A 347-amino-acid chain; its full sequence is GMP reductase (347 aa).

108 to 131 (ADFEKTVQILALNPALNFVCIDVA) lines the NADP(+) pocket. K(+)-binding residues include glycine 181 and glycine 183. Residue cysteine 186 is the Thioimidate intermediate of the active site. 216 to 239 (IVSDGGCTMPGDVAKAFGGGADFV) is a binding site for NADP(+).

It belongs to the IMPDH/GMPR family. GuaC type 1 subfamily. As to quaternary structure, homotetramer.

It carries out the reaction IMP + NH4(+) + NADP(+) = GMP + NADPH + 2 H(+). Its function is as follows. Catalyzes the irreversible NADPH-dependent deamination of GMP to IMP. It functions in the conversion of nucleobase, nucleoside and nucleotide derivatives of G to A nucleotides, and in maintaining the intracellular balance of A and G nucleotides. The chain is GMP reductase from Salmonella paratyphi A (strain ATCC 9150 / SARB42).